The primary structure comprises 280 residues: Elongation factor Ts (280 aa).

The tract at residues 79 to 82 is involved in Mg(2+) ion dislocation from EF-Tu; the sequence is TDFV.

It belongs to the EF-Ts family.

It localises to the cytoplasm. Its function is as follows. Associates with the EF-Tu.GDP complex and induces the exchange of GDP to GTP. It remains bound to the aminoacyl-tRNA.EF-Tu.GTP complex up to the GTP hydrolysis stage on the ribosome. The polypeptide is Elongation factor Ts (Treponema denticola (strain ATCC 35405 / DSM 14222 / CIP 103919 / JCM 8153 / KCTC 15104)).